Consider the following 64-residue polypeptide: Large ribosomal subunit protein bL35 (64 aa).

The protein belongs to the bacterial ribosomal protein bL35 family.

The polypeptide is Large ribosomal subunit protein bL35 (Streptomyces avermitilis (strain ATCC 31267 / DSM 46492 / JCM 5070 / NBRC 14893 / NCIMB 12804 / NRRL 8165 / MA-4680)).